Reading from the N-terminus, the 643-residue chain is Phosphomethylpyrimidine synthase (643 aa).

Substrate is bound by residues Asn-248, Met-277, Tyr-306, His-342, 362-364 (SRG), 403-406 (DGLR), and Glu-442. His-446 provides a ligand contact to Zn(2+). Tyr-469 contacts substrate. Residue His-510 participates in Zn(2+) binding. Positions 590, 593, and 598 each coordinate [4Fe-4S] cluster.

It belongs to the ThiC family. In terms of assembly, homodimer. [4Fe-4S] cluster serves as cofactor.

It catalyses the reaction 5-amino-1-(5-phospho-beta-D-ribosyl)imidazole + S-adenosyl-L-methionine = 4-amino-2-methyl-5-(phosphooxymethyl)pyrimidine + CO + 5'-deoxyadenosine + formate + L-methionine + 3 H(+). It functions in the pathway cofactor biosynthesis; thiamine diphosphate biosynthesis. Catalyzes the synthesis of the hydroxymethylpyrimidine phosphate (HMP-P) moiety of thiamine from aminoimidazole ribotide (AIR) in a radical S-adenosyl-L-methionine (SAM)-dependent reaction. This is Phosphomethylpyrimidine synthase from Burkholderia cenocepacia (strain HI2424).